A 197-amino-acid polypeptide reads, in one-letter code: Nucleoid occlusion factor SlmA (197 aa).

An HTH tetR-type domain is found at 7–67; that stretch reads INRREHILQC…GLIEFIEDAI (61 aa). A DNA-binding region (H-T-H motif) is located at residues 30–49; it reads TTAKLAAEVGVSEAALYRHF.

This sequence belongs to the nucleoid occlusion factor SlmA family. In terms of assembly, homodimer. Interacts with FtsZ.

It is found in the cytoplasm. The protein resides in the nucleoid. Required for nucleoid occlusion (NO) phenomenon, which prevents Z-ring formation and cell division over the nucleoid. Acts as a DNA-associated cell division inhibitor that binds simultaneously chromosomal DNA and FtsZ, and disrupts the assembly of FtsZ polymers. SlmA-DNA-binding sequences (SBS) are dispersed on non-Ter regions of the chromosome, preventing FtsZ polymerization at these regions. The sequence is that of Nucleoid occlusion factor SlmA from Shewanella denitrificans (strain OS217 / ATCC BAA-1090 / DSM 15013).